A 466-amino-acid polypeptide reads, in one-letter code: ATP synthase subunit beta (466 aa).

153–160 contacts ATP; that stretch reads GGAGVGKT.

The protein belongs to the ATPase alpha/beta chains family. F-type ATPases have 2 components, CF(1) - the catalytic core - and CF(0) - the membrane proton channel. CF(1) has five subunits: alpha(3), beta(3), gamma(1), delta(1), epsilon(1). CF(0) has three main subunits: a(1), b(2) and c(9-12). The alpha and beta chains form an alternating ring which encloses part of the gamma chain. CF(1) is attached to CF(0) by a central stalk formed by the gamma and epsilon chains, while a peripheral stalk is formed by the delta and b chains.

Its subcellular location is the cell membrane. The catalysed reaction is ATP + H2O + 4 H(+)(in) = ADP + phosphate + 5 H(+)(out). Functionally, produces ATP from ADP in the presence of a proton gradient across the membrane. The catalytic sites are hosted primarily by the beta subunits. The polypeptide is ATP synthase subunit beta (Leuconostoc mesenteroides subsp. mesenteroides (strain ATCC 8293 / DSM 20343 / BCRC 11652 / CCM 1803 / JCM 6124 / NCDO 523 / NBRC 100496 / NCIMB 8023 / NCTC 12954 / NRRL B-1118 / 37Y)).